Reading from the N-terminus, the 335-residue chain is 3-hydroxyproline 2-epimerase (335 aa).

The Proton acceptor role is filled by Cys91. Residues Gly92 to His93, Asp251, and Gly256 to Ser257 each bind substrate.

The protein belongs to the proline racemase family.

It catalyses the reaction trans-3-hydroxy-L-proline = cis-3-hydroxy-D-proline. The enzyme catalyses trans-4-hydroxy-L-proline = cis-4-hydroxy-D-proline. In terms of biological role, catalyzes the epimerization of trans-3-hydroxy-L-proline (t3LHyp) to cis-3-hydroxy-D-proline (c3DHyp) in vitro. Can also catalyze the epimerization of trans-4-hydroxy-L-proline (t3LHyp) to cis-4-hydroxy-D-proline (c4DHyp), albeit with 3.6-fold lower efficiency. Displays no proline racemase activity. This chain is 3-hydroxyproline 2-epimerase, found in Burkholderia multivorans (strain ATCC 17616 / 249).